The primary structure comprises 119 residues: Large ribosomal subunit protein uL24 (119 aa).

The protein belongs to the universal ribosomal protein uL24 family. Part of the 50S ribosomal subunit.

Functionally, one of two assembly initiator proteins, it binds directly to the 5'-end of the 23S rRNA, where it nucleates assembly of the 50S subunit. Located at the polypeptide exit tunnel on the outside of the subunit. The chain is Large ribosomal subunit protein uL24 from Haloquadratum walsbyi (strain DSM 16790 / HBSQ001).